The following is a 252-amino-acid chain: MQICLMDETGATDGALSVLAARWGLEHDEDNPMALVLTPQHLELRKRDEPKLGGIFVDFVGGAMAHRRKFGGGRGEAVAKAVGIKGDYLPDVVDATAGLGRDAFVLASVGCRVRMLERNPVVAALLDDGLTRGYADADIGGWLQERLQLIHVSSLTALTDITPRPQVVYLDPMFPHRQKSALVKKEMRVFQSLVGPDLDADGLLEPARQLATKRVVVKRPDYAPPLADVATPNAIVTKGHRFDIYAGTPLTE.

Residues 101–102, 117–118, 153–154, and aspartate 171 each bind S-adenosyl-L-methionine; these read RD, ER, and SS.

The protein belongs to the methyltransferase superfamily. RsmJ family.

It localises to the cytoplasm. The catalysed reaction is guanosine(1516) in 16S rRNA + S-adenosyl-L-methionine = N(2)-methylguanosine(1516) in 16S rRNA + S-adenosyl-L-homocysteine + H(+). In terms of biological role, specifically methylates the guanosine in position 1516 of 16S rRNA. In Salmonella heidelberg (strain SL476), this protein is Ribosomal RNA small subunit methyltransferase J.